Consider the following 184-residue polypeptide: ATP synthase subunit b, chloroplastic (184 aa).

A helical transmembrane segment spans residues 27-49 (LATNLINLSVVLGVLIFFGKGVL).

The protein belongs to the ATPase B chain family. As to quaternary structure, F-type ATPases have 2 components, F(1) - the catalytic core - and F(0) - the membrane proton channel. F(1) has five subunits: alpha(3), beta(3), gamma(1), delta(1), epsilon(1). F(0) has four main subunits: a(1), b(1), b'(1) and c(10-14). The alpha and beta chains form an alternating ring which encloses part of the gamma chain. F(1) is attached to F(0) by a central stalk formed by the gamma and epsilon chains, while a peripheral stalk is formed by the delta, b and b' chains.

It is found in the plastid. It localises to the chloroplast thylakoid membrane. Functionally, f(1)F(0) ATP synthase produces ATP from ADP in the presence of a proton or sodium gradient. F-type ATPases consist of two structural domains, F(1) containing the extramembraneous catalytic core and F(0) containing the membrane proton channel, linked together by a central stalk and a peripheral stalk. During catalysis, ATP synthesis in the catalytic domain of F(1) is coupled via a rotary mechanism of the central stalk subunits to proton translocation. In terms of biological role, component of the F(0) channel, it forms part of the peripheral stalk, linking F(1) to F(0). This Spinacia oleracea (Spinach) protein is ATP synthase subunit b, chloroplastic.